Consider the following 426-residue polypeptide: Histidine--tRNA ligase 1 (426 aa).

The protein belongs to the class-II aminoacyl-tRNA synthetase family. Homodimer.

It is found in the cytoplasm. The enzyme catalyses tRNA(His) + L-histidine + ATP = L-histidyl-tRNA(His) + AMP + diphosphate + H(+). The sequence is that of Histidine--tRNA ligase 1 from Shouchella clausii (strain KSM-K16) (Alkalihalobacillus clausii).